We begin with the raw amino-acid sequence, 473 residues long: Siroheme synthase (473 aa).

The segment at 1 to 222 is precorrin-2 dehydrogenase /sirohydrochlorin ferrochelatase; it reads MNTQPHHSSP…GDESRADARL (222 aa). Residues 37–38 and 58–59 each bind NAD(+); these read EI and EK. The tract at residues 233 to 473 is uroporphyrinogen-III C-methyltransferase; the sequence is GEVWLVGAGP…QVVRHRVVSP (241 aa). P242 is an S-adenosyl-L-methionine binding site. Residue D265 is the Proton acceptor of the active site. K287 serves as the catalytic Proton donor. Residues 318–320, I323, 348–349, M401, and G430 each bind S-adenosyl-L-methionine; these read GGD and SA.

In the N-terminal section; belongs to the precorrin-2 dehydrogenase / sirohydrochlorin ferrochelatase family. It in the C-terminal section; belongs to the precorrin methyltransferase family.

It catalyses the reaction uroporphyrinogen III + 2 S-adenosyl-L-methionine = precorrin-2 + 2 S-adenosyl-L-homocysteine + H(+). The catalysed reaction is precorrin-2 + NAD(+) = sirohydrochlorin + NADH + 2 H(+). The enzyme catalyses siroheme + 2 H(+) = sirohydrochlorin + Fe(2+). It participates in cofactor biosynthesis; adenosylcobalamin biosynthesis; precorrin-2 from uroporphyrinogen III: step 1/1. It functions in the pathway cofactor biosynthesis; adenosylcobalamin biosynthesis; sirohydrochlorin from precorrin-2: step 1/1. The protein operates within porphyrin-containing compound metabolism; siroheme biosynthesis; precorrin-2 from uroporphyrinogen III: step 1/1. Its pathway is porphyrin-containing compound metabolism; siroheme biosynthesis; siroheme from sirohydrochlorin: step 1/1. It participates in porphyrin-containing compound metabolism; siroheme biosynthesis; sirohydrochlorin from precorrin-2: step 1/1. Its function is as follows. Multifunctional enzyme that catalyzes the SAM-dependent methylations of uroporphyrinogen III at position C-2 and C-7 to form precorrin-2 via precorrin-1. Then it catalyzes the NAD-dependent ring dehydrogenation of precorrin-2 to yield sirohydrochlorin. Finally, it catalyzes the ferrochelation of sirohydrochlorin to yield siroheme. This is Siroheme synthase from Gluconobacter oxydans (strain 621H) (Gluconobacter suboxydans).